The primary structure comprises 87 residues: Cobalt transport protein CbiN (87 aa).

The next 2 helical transmembrane spans lie at 4–24 (LLLL…EWAG) and 58–78 (MLFS…LGYY).

This sequence belongs to the CbiN family. In terms of assembly, forms an energy-coupling factor (ECF) transporter complex composed of an ATP-binding protein (A component, CbiO), a transmembrane protein (T component, CbiQ) and 2 possible substrate-capture proteins (S components, CbiM and CbiN) of unknown stoichimetry.

It localises to the cell membrane. Its pathway is cofactor biosynthesis; adenosylcobalamin biosynthesis. In terms of biological role, part of the energy-coupling factor (ECF) transporter complex CbiMNOQ involved in cobalt import. This chain is Cobalt transport protein CbiN, found in Archaeoglobus fulgidus (strain ATCC 49558 / DSM 4304 / JCM 9628 / NBRC 100126 / VC-16).